Consider the following 139-residue polypeptide: Ribulose bisphosphate carboxylase small subunit (139 aa).

This sequence belongs to the RuBisCO small chain family. Heterohexadecamer of 8 large and 8 small subunits.

It localises to the plastid. Its subcellular location is the chloroplast. In terms of biological role, ruBisCO catalyzes two reactions: the carboxylation of D-ribulose 1,5-bisphosphate, the primary event in carbon dioxide fixation, as well as the oxidative fragmentation of the pentose substrate in the photorespiration process. Both reactions occur simultaneously and in competition at the same active site. Although the small subunit is not catalytic it is essential for maximal activity. This chain is Ribulose bisphosphate carboxylase small subunit, found in Thalassiosira nordenskioeldii (Marine diatom).